Reading from the N-terminus, the 416-residue chain is Tyrosine--tRNA ligase (416 aa).

The 'HIGH' region motif lies at 55–64 (PTGSEIHLGH). A 'KMSKS' region motif is present at residues 249–253 (KMSKS). K252 serves as a coordination point for ATP. The S4 RNA-binding domain occupies 352-416 (TKAFHLLSSI…GKKTFRRISN (65 aa)).

It belongs to the class-I aminoacyl-tRNA synthetase family. TyrS type 2 subfamily. Homodimer.

It is found in the cytoplasm. It catalyses the reaction tRNA(Tyr) + L-tyrosine + ATP = L-tyrosyl-tRNA(Tyr) + AMP + diphosphate + H(+). Catalyzes the attachment of tyrosine to tRNA(Tyr) in a two-step reaction: tyrosine is first activated by ATP to form Tyr-AMP and then transferred to the acceptor end of tRNA(Tyr). The polypeptide is Tyrosine--tRNA ligase (Prochlorococcus marinus (strain SARG / CCMP1375 / SS120)).